The primary structure comprises 130 residues: Mediator of RNA polymerase II transcription subunit 31 (130 aa).

This sequence belongs to the Mediator complex subunit 31 family. In terms of assembly, component of the Mediator complex.

The protein localises to the nucleus. Component of the Mediator complex, a coactivator involved in the regulated transcription of nearly all RNA polymerase II-dependent genes. Mediator functions as a bridge to convey information from gene-specific regulatory proteins to the basal RNA polymerase II transcription machinery. Mediator is recruited to promoters by direct interactions with regulatory proteins and serves as a scaffold for the assembly of a functional preinitiation complex with RNA polymerase II and the general transcription factors. This is Mediator of RNA polymerase II transcription subunit 31 (SOH1) from Candida glabrata (strain ATCC 2001 / BCRC 20586 / JCM 3761 / NBRC 0622 / NRRL Y-65 / CBS 138) (Yeast).